Here is a 206-residue protein sequence, read N- to C-terminus: LexA repressor (206 aa).

A DNA-binding region (H-T-H motif) is located at residues 28 to 48; it reads RAEIATRLGFKSANAAEEHLK. Active-site for autocatalytic cleavage activity residues include S123 and K160.

It belongs to the peptidase S24 family. As to quaternary structure, homodimer.

The catalysed reaction is Hydrolysis of Ala-|-Gly bond in repressor LexA.. Its function is as follows. Represses a number of genes involved in the response to DNA damage (SOS response), including recA and lexA. In the presence of single-stranded DNA, RecA interacts with LexA causing an autocatalytic cleavage which disrupts the DNA-binding part of LexA, leading to derepression of the SOS regulon and eventually DNA repair. In Shewanella sp. (strain ANA-3), this protein is LexA repressor.